Reading from the N-terminus, the 487-residue chain is Malonate-semialdehyde dehydrogenase 2 (487 aa).

Residues F154, K178, E181, R182, and S231 each coordinate NAD(+). The Nucleophile role is filled by C286. NAD(+) is bound at residue E386.

The protein belongs to the aldehyde dehydrogenase family. IolA subfamily. Homotetramer.

The enzyme catalyses 3-oxopropanoate + NAD(+) + CoA + H2O = hydrogencarbonate + acetyl-CoA + NADH + H(+). It catalyses the reaction 2-methyl-3-oxopropanoate + NAD(+) + CoA + H2O = propanoyl-CoA + hydrogencarbonate + NADH + H(+). Its pathway is polyol metabolism; myo-inositol degradation into acetyl-CoA; acetyl-CoA from myo-inositol: step 7/7. Catalyzes the oxidation of malonate semialdehyde (MSA) and methylmalonate semialdehyde (MMSA) into acetyl-CoA and propanoyl-CoA, respectively. Is involved in a myo-inositol catabolic pathway. Bicarbonate, and not CO2, is the end-product of the enzymatic reaction. This Bacillus thuringiensis subsp. konkukian (strain 97-27) protein is Malonate-semialdehyde dehydrogenase 2.